We begin with the raw amino-acid sequence, 281 residues long: Leukocyte antigen CD37 (281 aa).

Residues 1–17 (MSAQESCLSLIKYFLFV) are Cytoplasmic-facing. A helical transmembrane segment spans residues 18 to 38 (FNLFFFVLGGLIFCFGTWILI). Topologically, residues 39–59 (DKTSFVSFVGLSFVPLQTWSK) are extracellular. The helical transmembrane segment at 60–74 (VLAVSGVLTMALALL) threads the bilayer. At 75-85 (GCVGALKELRC) the chain is on the cytoplasmic side. The chain crosses the membrane as a helical span at residues 86–111 (LLGLYFGMLLLLFATQITLGILISTQ). Topologically, residues 112–241 (RVRLERRVQE…QSLQKWLHNN (130 aa)) are extracellular. 3 N-linked (GlcNAc...) asparagine glycosylation sites follow: N170, N183, and N188. A helical transmembrane segment spans residues 242-266 (IISIVGICLGVGLLELGFMTLSIFL). Residues 267-281 (CRNLDHVYDRLARYR) are Cytoplasmic-facing.

This sequence belongs to the tetraspanin (TM4SF) family. As to quaternary structure, interacts with SCIMP. Interacts with SOCS3. Interacts with DECTIN1/CLEC7A. Post-translationally, tyrosine phosphorylated; leading to activation of downstream signaling pathways.

It is found in the cell membrane. Its function is as follows. Structural component of specialized membrane microdomains known as tetraspanin-enriched microdomains (TERMs), which act as platforms for receptor clustering and signaling. Participates thereby in diverse biological functions such as cell signal transduction, adhesion, migration and protein trafficking. Upon ligand binding, two signaling pathways are activated, one acting through phosphorylation by LYN leading to cell death or a survival pathway with activation of GSK3B. Plays an essential role for clustering of integrin ITGA4/ITGB1 and promotes its mobility in the plasma membrane of B-cells. In turn, participates in ITGA4/ITGB1 integrin-mediated antiapoptotic signaling through AKT. Also plays a role in the migration of dendritic cells and neutrophils to draining lymph nodes, as well as in their integrin-mediated adhesion. Negatively regulates IL-6 responses through direct interaction with SOCS3 thereby preventing constitutive IL-6 signaling. Alternatively, inhibition of IL-6 signaling can also occur via interaction and stabilization of DECTIN1/CLEC7A at the cell membrane to inhibit its ability to promote the production of IL-6. The polypeptide is Leukocyte antigen CD37 (Cd37) (Mus musculus (Mouse)).